The sequence spans 152 residues: Small ribosomal subunit protein uS8m (152 aa).

This sequence belongs to the universal ribosomal protein uS8 family.

It is found in the mitochondrion. The sequence is that of Small ribosomal subunit protein uS8m (mrps8) from Dictyostelium citrinum (Slime mold).